A 471-amino-acid polypeptide reads, in one-letter code: Type 2 glycosyltransferase (471 aa).

A helical membrane pass occupies residues 4 to 24 (ILGWFWAFVSAFVLRYLRTIV). Residues Asn29, Asn88, and Asn222 are each glycosylated (N-linked (GlcNAc...) asparagine). 3 consecutive transmembrane segments (helical) span residues 305 to 325 (CLQT…FYSL), 339 to 359 (MAFT…KLWG), and 368 to 388 (VIYI…KFWG). N-linked (GlcNAc...) asparagine glycosylation is present at Asn458.

This sequence belongs to the GT2 glycosyltransferase family.

It is found in the cell membrane. In terms of biological role, glycosyltransferase involved in the maintenance of the outermost surface of the fungal cell wall. Likely functions in the synthesis of a currently unknown, potentially minor but widespread, extracellular or outer cell wall polysaccharide which plays a key role in facilitating many interactions between plants and fungi by enabling hyphal growth on solid matrices. In Zymoseptoria tritici (strain CBS 115943 / IPO323) (Speckled leaf blotch fungus), this protein is Type 2 glycosyltransferase.